A 790-amino-acid polypeptide reads, in one-letter code: LPS-assembly protein LptD (790 aa).

Positions 1 to 20 (MRMLRWLILSAFSVAGAVQA) are cleaved as a signal peptide.

The protein belongs to the LptD family. In terms of assembly, component of the lipopolysaccharide transport and assembly complex. Interacts with LptE and LptA.

It is found in the cell outer membrane. In terms of biological role, together with LptE, is involved in the assembly of lipopolysaccharide (LPS) at the surface of the outer membrane. This Bordetella parapertussis (strain 12822 / ATCC BAA-587 / NCTC 13253) protein is LPS-assembly protein LptD.